A 90-amino-acid chain; its full sequence is Probable Fe(2+)-trafficking protein (90 aa).

It belongs to the Fe(2+)-trafficking protein family.

Functionally, could be a mediator in iron transactions between iron acquisition and iron-requiring processes, such as synthesis and/or repair of Fe-S clusters in biosynthetic enzymes. The polypeptide is Probable Fe(2+)-trafficking protein (Pseudomonas putida (strain W619)).